Consider the following 297-residue polypeptide: DNA excision repair protein ERCC-1 (297 aa).

Met1 carries the N-acetylmethionine modification. The interval 1–39 (MDPGKDKEGVPQPSGPPARKKFVIPLDEDEVPPGVAKPL) is disordered. The Nuclear localization signal signature appears at 17 to 23 (PARKKFV). Glycyl lysine isopeptide (Lys-Gly) (interchain with G-Cter in SUMO2) cross-links involve residues Lys21 and Lys37. A DNA-binding region spans residues 134–156 (QSTCALFLSLRYHNLHPDYIHGR). The hhH2, dimerization with ERCC4/XPF stretch occupies residues 220–297 (ADLLMEKLEQ…VLHEPFLKVP (78 aa)). A Glycyl lysine isopeptide (Lys-Gly) (interchain with G-Cter in SUMO2) cross-link involves residue Lys243.

This sequence belongs to the ERCC1/RAD10/SWI10 family. As to quaternary structure, heterodimer composed of ERCC1 isoform 1 and ERCC4/XPF. Interacts with USP45. Does not interact with ERCC4/XPF. Post-translationally, ubiquitinated with both 'Lys-48' and 'Lys-63' linkages. Deubiquitinated by USP45.

The protein localises to the nucleus. It localises to the cytoplasm. Non-catalytic component of a structure-specific DNA repair endonuclease responsible for the 5'-incision during DNA repair. Responsible, in conjunction with SLX4, for the first step in the repair of interstrand cross-links (ICL). Participates in the processing of anaphase bridge-generating DNA structures, which consist in incompletely processed DNA lesions arising during S or G2 phase, and can result in cytokinesis failure. Also required for homology-directed repair (HDR) of DNA double-strand breaks, in conjunction with SLX4. Functionally, not functional in the nucleotide excision repair pathway. The chain is DNA excision repair protein ERCC-1 (ERCC1) from Homo sapiens (Human).